The following is a 187-amino-acid chain: Threonylcarbamoyl-AMP synthase (187 aa).

The 185-residue stretch at 3–187 (QVLPADAAEL…ARSGTVIREG (185 aa)) folds into the YrdC-like domain.

Belongs to the SUA5 family. TsaC subfamily.

It is found in the cytoplasm. The enzyme catalyses L-threonine + hydrogencarbonate + ATP = L-threonylcarbamoyladenylate + diphosphate + H2O. In terms of biological role, required for the formation of a threonylcarbamoyl group on adenosine at position 37 (t(6)A37) in tRNAs that read codons beginning with adenine. Catalyzes the conversion of L-threonine, HCO(3)(-)/CO(2) and ATP to give threonylcarbamoyl-AMP (TC-AMP) as the acyladenylate intermediate, with the release of diphosphate. This chain is Threonylcarbamoyl-AMP synthase, found in Shewanella pealeana (strain ATCC 700345 / ANG-SQ1).